Reading from the N-terminus, the 207-residue chain is Large ribosomal subunit protein uL4 (207 aa).

Residues 52–75 (KNRSAVRGGGKKPWRQKGTGRARQ) form a disordered region. A compositionally biased stretch (basic residues) spans 60–71 (GGKKPWRQKGTG).

This sequence belongs to the universal ribosomal protein uL4 family. In terms of assembly, part of the 50S ribosomal subunit.

In terms of biological role, one of the primary rRNA binding proteins, this protein initially binds near the 5'-end of the 23S rRNA. It is important during the early stages of 50S assembly. It makes multiple contacts with different domains of the 23S rRNA in the assembled 50S subunit and ribosome. Functionally, forms part of the polypeptide exit tunnel. The protein is Large ribosomal subunit protein uL4 of Limosilactobacillus fermentum (strain NBRC 3956 / LMG 18251) (Lactobacillus fermentum).